The chain runs to 100 residues: Integration host factor subunit beta (100 aa).

It belongs to the bacterial histone-like protein family. Heterodimer of an alpha and a beta chain.

This protein is one of the two subunits of integration host factor, a specific DNA-binding protein that functions in genetic recombination as well as in transcriptional and translational control. The sequence is that of Integration host factor subunit beta from Rhodospirillum rubrum (strain ATCC 11170 / ATH 1.1.1 / DSM 467 / LMG 4362 / NCIMB 8255 / S1).